Consider the following 513-residue polypeptide: ATP synthase subunit alpha (513 aa).

Residue 169–176 (GDRQCGKT) coordinates ATP.

This sequence belongs to the ATPase alpha/beta chains family. As to quaternary structure, F-type ATPases have 2 components, CF(1) - the catalytic core - and CF(0) - the membrane proton channel. CF(1) has five subunits: alpha(3), beta(3), gamma(1), delta(1), epsilon(1). CF(0) has three main subunits: a(1), b(2) and c(9-12). The alpha and beta chains form an alternating ring which encloses part of the gamma chain. CF(1) is attached to CF(0) by a central stalk formed by the gamma and epsilon chains, while a peripheral stalk is formed by the delta and b chains.

It localises to the cell inner membrane. It catalyses the reaction ATP + H2O + 4 H(+)(in) = ADP + phosphate + 5 H(+)(out). Produces ATP from ADP in the presence of a proton gradient across the membrane. The alpha chain is a regulatory subunit. The protein is ATP synthase subunit alpha of Alteromonas mediterranea (strain DSM 17117 / CIP 110805 / LMG 28347 / Deep ecotype).